Reading from the N-terminus, the 347-residue chain is Phenylalanine--tRNA ligase alpha subunit (347 aa).

Glu-265 contacts Mg(2+).

The protein belongs to the class-II aminoacyl-tRNA synthetase family. Phe-tRNA synthetase alpha subunit type 1 subfamily. Tetramer of two alpha and two beta subunits. The cofactor is Mg(2+).

The protein resides in the cytoplasm. It catalyses the reaction tRNA(Phe) + L-phenylalanine + ATP = L-phenylalanyl-tRNA(Phe) + AMP + diphosphate + H(+). The chain is Phenylalanine--tRNA ligase alpha subunit from Mycolicibacterium gilvum (strain PYR-GCK) (Mycobacterium gilvum (strain PYR-GCK)).